Here is a 921-residue protein sequence, read N- to C-terminus: Isoleucine--tRNA ligase (921 aa).

Positions 57 to 67 (PYANGELHMGH) match the 'HIGH' region motif. L-isoleucyl-5'-AMP is bound at residue glutamate 552. Residues 593–597 (KMSKS) carry the 'KMSKS' region motif. Lysine 596 provides a ligand contact to ATP. Zn(2+)-binding residues include cysteine 888, cysteine 891, cysteine 908, and cysteine 911.

It belongs to the class-I aminoacyl-tRNA synthetase family. IleS type 1 subfamily. As to quaternary structure, monomer. Requires Zn(2+) as cofactor.

Its subcellular location is the cytoplasm. It carries out the reaction tRNA(Ile) + L-isoleucine + ATP = L-isoleucyl-tRNA(Ile) + AMP + diphosphate. In terms of biological role, catalyzes the attachment of isoleucine to tRNA(Ile). As IleRS can inadvertently accommodate and process structurally similar amino acids such as valine, to avoid such errors it has two additional distinct tRNA(Ile)-dependent editing activities. One activity is designated as 'pretransfer' editing and involves the hydrolysis of activated Val-AMP. The other activity is designated 'posttransfer' editing and involves deacylation of mischarged Val-tRNA(Ile). The sequence is that of Isoleucine--tRNA ligase from Listeria monocytogenes serotype 4b (strain F2365).